The sequence spans 566 residues: Arginine--tRNA ligase (566 aa).

The 'HIGH' region signature appears at 120–130 (PNIAKPFHVGH).

Belongs to the class-I aminoacyl-tRNA synthetase family. As to quaternary structure, monomer.

It localises to the cytoplasm. The catalysed reaction is tRNA(Arg) + L-arginine + ATP = L-arginyl-tRNA(Arg) + AMP + diphosphate. This chain is Arginine--tRNA ligase, found in Clostridium kluyveri (strain NBRC 12016).